A 427-amino-acid polypeptide reads, in one-letter code: Enolase (427 aa).

Gln-163 provides a ligand contact to (2R)-2-phosphoglycerate. Residue Glu-205 is the Proton donor of the active site. 3 residues coordinate Mg(2+): Asp-242, Glu-285, and Asp-312. (2R)-2-phosphoglycerate-binding residues include Lys-337, Arg-366, Ser-367, and Lys-388. The active-site Proton acceptor is Lys-337.

This sequence belongs to the enolase family. Mg(2+) is required as a cofactor.

It is found in the cytoplasm. The protein localises to the secreted. The protein resides in the cell surface. The catalysed reaction is (2R)-2-phosphoglycerate = phosphoenolpyruvate + H2O. Its pathway is carbohydrate degradation; glycolysis; pyruvate from D-glyceraldehyde 3-phosphate: step 4/5. Catalyzes the reversible conversion of 2-phosphoglycerate (2-PG) into phosphoenolpyruvate (PEP). It is essential for the degradation of carbohydrates via glycolysis. The protein is Enolase of Burkholderia orbicola (strain MC0-3).